Reading from the N-terminus, the 92-residue chain is UPF0125 protein NMA1005 (92 aa).

This sequence belongs to the UPF0125 (RnfH) family.

This is UPF0125 protein NMA1005 from Neisseria meningitidis serogroup A / serotype 4A (strain DSM 15465 / Z2491).